Reading from the N-terminus, the 1108-residue chain is Retinal guanylyl cyclase 2 (1108 aa).

The signal sequence occupies residues 1 to 50 (MFLGLGRFSRLVLWFAAFRKLLGHHGLASAKFLWCLCLLSVMSLPQQVWT). Topologically, residues 51–467 (LPYKIGVVGP…KICHGGIDPA (417 aa)) are extracellular. A disulfide bridge connects residues cysteine 104 and cysteine 132. A helical transmembrane segment spans residues 468–490 (FAMMVCLTLLIALLSINGFAYFI). Residues 491 to 1108 (RRRINKIQLI…AERQLVRNKP (618 aa)) lie on the Cytoplasmic side of the membrane. One can recognise a Protein kinase domain in the interval 532-812 (FQITSEVQSG…DEIFNQFKTF (281 aa)). A Guanylate cyclase domain is found at 884–1014 (TLYFSDIVGF…DTVNTASRME (131 aa)).

The protein belongs to the adenylyl cyclase class-4/guanylyl cyclase family. Homodimer. Interacts with RD3; promotes the exit of GUCY2F from the endoplasmic reticulum and its trafficking to the photoreceptor outer segments. There are 9 conserved cysteine residues in sensory guanylate cyclases, 6 in the extracellular domain, which may be involved in intra- or interchain disulfide bonds. In terms of tissue distribution, retina. Localized exclusively in the outer nuclear layer and inner segments of the rod and cone photoreceptor cells.

It is found in the photoreceptor outer segment membrane. It catalyses the reaction GTP = 3',5'-cyclic GMP + diphosphate. Its activity is regulated as follows. Activated by GUCA1B when free calcium ions concentration is low, and inhibited by GUCA1B when free calcium ions concentration is high. Inhibited by RD3. Functionally, responsible for the synthesis of cyclic GMP (cGMP) in rods and cones of photoreceptors. Plays an essential role in phototransduction, by mediating cGMP replenishment. May also participate in the trafficking of membrane-asociated proteins to the photoreceptor outer segment membrane. This Homo sapiens (Human) protein is Retinal guanylyl cyclase 2 (GUCY2F).